A 361-amino-acid chain; its full sequence is Glutaminyl-peptide cyclotransferase (361 aa).

Positions 1–28 (MAGCRDPRVVDTLHLLLLVAVLPLAVSG) are cleaved as a signal peptide. N-linked (GlcNAc...) asparagine glycosylation is present at N49. The cysteines at positions 139 and 164 are disulfide-linked. D159 contacts Zn(2+). N183 carries N-linked (GlcNAc...) asparagine glycosylation. Catalysis depends on E201, which acts as the Proton acceptor. Residue E202 participates in Zn(2+) binding. D248 acts as the Proton acceptor in catalysis. Position 330 (H330) interacts with Zn(2+).

It belongs to the glutaminyl-peptide cyclotransferase family. Expressed mainly in brain tissue.

Its subcellular location is the secreted. It catalyses the reaction N-terminal L-glutaminyl-[peptide] = N-terminal 5-oxo-L-prolyl-[peptide] + NH4(+). In terms of biological role, responsible for the biosynthesis of pyroglutamyl peptides. Has a bias against acidic and tryptophan residues adjacent to the N-terminal glutaminyl residue and a lack of importance of chain length after the second residue. Also catalyzes N-terminal pyroglutamate formation. This is Glutaminyl-peptide cyclotransferase (QPCT) from Bos taurus (Bovine).